Consider the following 108-residue polypeptide: ATP synthase peripheral stalk subunit F6, mitochondrial (108 aa).

A mitochondrion-targeting transit peptide spans 1–32; that stretch reads MILQRLFRLSSAVQSAISVSWRRNIGITAVAF. Lysine 41, lysine 46, and lysine 79 each carry N6-acetyllysine. An N6-acetyllysine; alternate mark is found at lysine 84 and lysine 99. N6-succinyllysine; alternate is present on residues lysine 84 and lysine 99. An N6-acetyllysine modification is found at lysine 105. Position 108 is a phosphoserine (serine 108).

It belongs to the eukaryotic ATPase subunit F6 family. As to quaternary structure, component of the ATP synthase complex composed at least of ATP5F1A/subunit alpha, ATP5F1B/subunit beta, ATP5MC1/subunit c (homooctomer), MT-ATP6/subunit a, MT-ATP8/subunit 8, ATP5ME/subunit e, ATP5MF/subunit f, ATP5MG/subunit g, ATP5MK/subunit k, ATP5MJ/subunit j, ATP5F1C/subunit gamma, ATP5F1D/subunit delta, ATP5F1E/subunit epsilon, ATP5PF/subunit F6, ATP5PB/subunit b, ATP5PD/subunit d, ATP5PO/subunit OSCP. ATP synthase complex consists of a soluble F(1) head domain (subunits alpha(3) and beta(3)) - the catalytic core - and a membrane F(0) domain - the membrane proton channel (subunits c, a, 8, e, f, g, k and j). These two domains are linked by a central stalk (subunits gamma, delta, and epsilon) rotating inside the F1 region and a stationary peripheral stalk (subunits F6, b, d, and OSCP).

It localises to the mitochondrion. Its subcellular location is the mitochondrion inner membrane. Subunit F6, of the mitochondrial membrane ATP synthase complex (F(1)F(0) ATP synthase or Complex V) that produces ATP from ADP in the presence of a proton gradient across the membrane which is generated by electron transport complexes of the respiratory chain. ATP synthase complex consist of a soluble F(1) head domain - the catalytic core - and a membrane F(1) domain - the membrane proton channel. These two domains are linked by a central stalk rotating inside the F(1) region and a stationary peripheral stalk. During catalysis, ATP synthesis in the catalytic domain of F(1) is coupled via a rotary mechanism of the central stalk subunits to proton translocation. In vivo, can only synthesize ATP although its ATP hydrolase activity can be activated artificially in vitro. Part of the complex F(0) domain. Part of the complex F(0) domain and the peripheric stalk, which acts as a stator to hold the catalytic alpha(3)beta(3) subcomplex and subunit a/ATP6 static relative to the rotary elements. This Bos taurus (Bovine) protein is ATP synthase peripheral stalk subunit F6, mitochondrial.